The following is a 273-amino-acid chain: Glutamate racemase (273 aa).

Substrate-binding positions include 11–12 and 43–44; these read DS and YG. Cys-74 functions as the Proton donor/acceptor in the catalytic mechanism. Residue 75-76 participates in substrate binding; sequence NT. The active-site Proton donor/acceptor is Cys-185. 186–187 is a binding site for substrate; the sequence is TH.

Belongs to the aspartate/glutamate racemases family.

The enzyme catalyses L-glutamate = D-glutamate. The protein operates within cell wall biogenesis; peptidoglycan biosynthesis. In terms of biological role, provides the (R)-glutamate required for cell wall biosynthesis. The sequence is that of Glutamate racemase from Lactiplantibacillus plantarum (strain ATCC BAA-793 / NCIMB 8826 / WCFS1) (Lactobacillus plantarum).